Reading from the N-terminus, the 164-residue chain is Kunitz-type trypsin inhibitor BrTI (164 aa).

This sequence belongs to the leguminous Kunitz-type inhibitor family.

In terms of biological role, inhibitor of trypsin and human plasma kallikrein with a Ki of 2.9 nM and 14.0 nM, respectively. Does not inhibit chymotrypsin, porcine pancreatic elastas, human neutrophil elastase, coagulation factor Xa, human thrombin, porcine pancreatic kallikrein or plasmin. This Bauhinia rufa (Orchid tree) protein is Kunitz-type trypsin inhibitor BrTI.